The sequence spans 318 residues: L-carnitine dehydrogenase (318 aa).

14–19 (GAGVIG) provides a ligand contact to NAD(+).

Belongs to the 3-hydroxyacyl-CoA dehydrogenase family. L-carnitine dehydrogenase subfamily. As to quaternary structure, homodimer.

It localises to the cytoplasm. The enzyme catalyses carnitine + NAD(+) = 3-dehydrocarnitine + NADH + H(+). It functions in the pathway amine and polyamine metabolism; carnitine metabolism. In terms of biological role, catalyzes the NAD(+)-dependent oxidation of L-carnitine to 3-dehydrocarnitine. This is L-carnitine dehydrogenase from Streptomyces coelicolor (strain ATCC BAA-471 / A3(2) / M145).